Here is a 389-residue protein sequence, read N- to C-terminus: Putative nickel insertion protein (389 aa).

Belongs to the LarC family.

The polypeptide is Putative nickel insertion protein (Desulfotalea psychrophila (strain LSv54 / DSM 12343)).